We begin with the raw amino-acid sequence, 377 residues long: 5-hydroxytryptamine receptor 1D (377 aa).

3 N-linked (GlcNAc...) asparagine glycosylation sites follow: asparagine 5, asparagine 17, and asparagine 21. A run of 3 helical transmembrane segments spans residues 39–64, 76–97, and 110–134; these read ISLAVVLSIITVATVLSNTFVLTTIL, LIGSLATTDLLVSILVMPISIA, and LCDIWVSSDITCCTASILHLCVIAL. The cysteines at positions 111 and 188 are disulfide-linked. Serotonin contacts are provided by aspartate 118 and cysteine 122. The DRY motif; important for ligand-induced conformation changes signature appears at 135–137; it reads DRY. 4 helical membrane passes run 155–176, 195–218, 301–326, and 336–359; these read AAAMIAVVWAISICISIPPLFW, ISYTIYSTCGAFYIPSVLLIVLYG, KTLGIILGAFIGCWLPFFVASLVLPI, and GLFDFFTWLGYLNSLINPIIYTVF. Serine 321 is a serotonin binding site. The NPxxY motif; important for ligand-induced conformation changes and signaling motif lies at 352 to 356; sequence NPIIY.

Belongs to the G-protein coupled receptor 1 family. In terms of assembly, homodimer. Heterodimer with HTR1B.

It is found in the cell membrane. Functionally, G-protein coupled receptor for 5-hydroxytryptamine (serotonin). Also functions as a receptor for ergot alkaloid derivatives, various anxiolytic and antidepressant drugs and other psychoactive substances. Ligand binding causes a conformation change that triggers signaling via guanine nucleotide-binding proteins (G proteins) and modulates the activity of downstream effectors, such as adenylate cyclase. HTR1D is coupled to G(i)/G(o) G alpha proteins and mediates inhibitory neurotransmission by inhibiting adenylate cyclase activity. Regulates the release of 5-hydroxytryptamine in the brain, and thereby affects neural activity. May also play a role in regulating the release of other neurotransmitters. May play a role in vasoconstriction. This Oryctolagus cuniculus (Rabbit) protein is 5-hydroxytryptamine receptor 1D (HTR1D).